The chain runs to 348 residues: SUMO-activating enzyme subunit 1 (348 aa).

Belongs to the ubiquitin-activating E1 family. In terms of assembly, heterodimer of sae1 and uba2/sae2. The heterodimer corresponds to the two domains that are encoded on a single polypeptide chain in ubiquitin-activating enzyme E1. Interacts with ube2i.

It localises to the nucleus. It participates in protein modification; protein sumoylation. Functionally, the heterodimer acts as an E1 ligase for sumo1, sumo2, and sumo3. It mediates ATP-dependent activation of sumo proteins followed by formation of a thioester bond between a sumo protein and a conserved active site cysteine residue on uba2/sae2. The chain is SUMO-activating enzyme subunit 1 (sae1) from Danio rerio (Zebrafish).